The sequence spans 91 residues: Small ribosomal subunit protein bS16c (91 aa).

It belongs to the bacterial ribosomal protein bS16 family.

Its subcellular location is the plastid. The protein localises to the chloroplast. This chain is Small ribosomal subunit protein bS16c, found in Vitis vinifera (Grape).